Consider the following 191-residue polypeptide: Orotate phosphoribosyltransferase (191 aa).

Residue 116–124 (EDVVTTGGS) participates in 5-phospho-alpha-D-ribose 1-diphosphate binding. Positions 120 and 148 each coordinate orotate.

This sequence belongs to the purine/pyrimidine phosphoribosyltransferase family. PyrE subfamily. Homodimer. Requires Mg(2+) as cofactor.

The enzyme catalyses orotidine 5'-phosphate + diphosphate = orotate + 5-phospho-alpha-D-ribose 1-diphosphate. The protein operates within pyrimidine metabolism; UMP biosynthesis via de novo pathway; UMP from orotate: step 1/2. Catalyzes the transfer of a ribosyl phosphate group from 5-phosphoribose 1-diphosphate to orotate, leading to the formation of orotidine monophosphate (OMP). The sequence is that of Orotate phosphoribosyltransferase from Heliobacterium modesticaldum (strain ATCC 51547 / Ice1).